We begin with the raw amino-acid sequence, 326 residues long: Beta-ketoacyl-[acyl-carrier-protein] synthase III (326 aa).

Active-site residues include cysteine 112 and histidine 251. The interval 252–256 (QANSR) is ACP-binding. Asparagine 281 is a catalytic residue.

It belongs to the thiolase-like superfamily. FabH family. As to quaternary structure, homodimer.

The protein resides in the cytoplasm. The enzyme catalyses malonyl-[ACP] + acetyl-CoA + H(+) = 3-oxobutanoyl-[ACP] + CO2 + CoA. The protein operates within lipid metabolism; fatty acid biosynthesis. Catalyzes the condensation reaction of fatty acid synthesis by the addition to an acyl acceptor of two carbons from malonyl-ACP. Catalyzes the first condensation reaction which initiates fatty acid synthesis and may therefore play a role in governing the total rate of fatty acid production. Possesses both acetoacetyl-ACP synthase and acetyl transacylase activities. Its substrate specificity determines the biosynthesis of branched-chain and/or straight-chain of fatty acids. This Clostridium botulinum (strain Kyoto / Type A2) protein is Beta-ketoacyl-[acyl-carrier-protein] synthase III.